A 707-amino-acid chain; its full sequence is tRNA 5-methylaminomethyl-2-thiouridine biosynthesis bifunctional protein MnmC (707 aa).

A tRNA (mnm(5)s(2)U34)-methyltransferase region spans residues 1–264 (MTKKLEHEYI…KREMLFGTFE (264 aa)). The segment at 312–707 (IGGGLAGAHA…LFRDLTRNRI (396 aa)) is FAD-dependent cmnm(5)s(2)U34 oxidoreductase.

This sequence in the N-terminal section; belongs to the methyltransferase superfamily. tRNA (mnm(5)s(2)U34)-methyltransferase family. In the C-terminal section; belongs to the DAO family. FAD is required as a cofactor.

It is found in the cytoplasm. It carries out the reaction 5-aminomethyl-2-thiouridine(34) in tRNA + S-adenosyl-L-methionine = 5-methylaminomethyl-2-thiouridine(34) in tRNA + S-adenosyl-L-homocysteine + H(+). Its function is as follows. Catalyzes the last two steps in the biosynthesis of 5-methylaminomethyl-2-thiouridine (mnm(5)s(2)U) at the wobble position (U34) in tRNA. Catalyzes the FAD-dependent demodification of cmnm(5)s(2)U34 to nm(5)s(2)U34, followed by the transfer of a methyl group from S-adenosyl-L-methionine to nm(5)s(2)U34, to form mnm(5)s(2)U34. The polypeptide is tRNA 5-methylaminomethyl-2-thiouridine biosynthesis bifunctional protein MnmC (Saccharophagus degradans (strain 2-40 / ATCC 43961 / DSM 17024)).